The sequence spans 131 residues: Protein TIFY 5A (131 aa).

The short motif at 9–13 (LELRL) is the EAR element. 2 disordered regions span residues 14–44 (FPTS…EESQ) and 74–131 (REMK…HSRR). Over residues 16-34 (TSYDSDSSDTTSVVESTSS) the composition is skewed to low complexity. The 36-residue stretch at 39 to 74 (PNEESQRITIFYNGKMCFSSDVTHLQARSIISIASR) folds into the Tify domain. A compositionally biased stretch (polar residues) spans 79 to 100 (KSSSNGSDPPNKSTSFHHNQLP). Positions 105–127 (SMKKSLQSFLQKRKIRIQATSPY) match the Jas motif. Positions 106 to 113 (MKKSLQSF) match the Nuclear localization signal motif. A compositionally biased stretch (polar residues) spans 122 to 131 (QATSPYHSRR).

This sequence belongs to the TIFY/JAZ family. In terms of assembly, interacts with TPL and weakly with COI1, but not with AFPH2/NINJA. Interacts with MYC2, MYB21, MYB24, TIFY10A/JAZ1, TIFY10B/JAZ2, TIFY6B/JAZ3, TIFY6A/JAZ4, TIFY11A/JAZ5, TIFY11B/JAZ6, TIFY7/JAZ9, TIFY9/JAZ10 and TIFY3B/JAZ12. Interacts with RHD6 and RSL1. As to quaternary structure, (Microbial infection) Interacts with the pathogenic Pseudomonas syringae HopZ1a protein. In terms of processing, (Microbial infection) Acetylated by Pseudomonas syringae HopZ1a. Post-translationally, ubiquitinated.

The protein resides in the nucleus. In terms of biological role, repressor of jasmonate responses. Unable to associate strongly with COI1 in the presence of jasmonoyl-isoleucine (JA-Ile) and is therefore more resistant to JA-mediated-degradation than other TIFY/JAZ proteins. Repress gene expression through direct recruitment of the corepressor TOPLESS to cognate transcription factors. Interacts with and suppresses RHD6 and RSL1 transcription factor activities to negatively regulate jasmonate-stimulated root hair development. This Arabidopsis thaliana (Mouse-ear cress) protein is Protein TIFY 5A.